A 759-amino-acid polypeptide reads, in one-letter code: Forkhead box protein M1 (759 aa).

A disordered region spans residues 1–92; it reads MRTSPRRPLI…MRLPSNPPQS (92 aa). Over residues 48–63 the composition is skewed to basic and acidic residues; it reads LAHELEDMAPKSKADQ. A DNA-binding region (fork-head) is located at residues 260-358; sequence RPPYSYMALI…KTASPMSPAD (99 aa). Disordered stretches follow at residues 420 to 450, 516 to 535, and 596 to 631; these read AESSDGQQSSKRVKIAPKATADDGESPKHLG, SANPNQNLTSHPTQNCPSNV, and KEHFSKPTTSSTPSKPTDTGLLQPWESETSLPRDPV. A compositionally biased stretch (low complexity) spans 601–612; that stretch reads KPTTSSTPSKPT.

Localized to the animal hemisphere of early cleavage stage embryos. During neurulation, expressed in the neural folds. Later, expressed in the spinal cord and in the eye field. During tailbud stages, expression is still restricted to the neuroectoderm, predominantly to the hindbrain, the eye and the spinal cord. With ongoing development, expression is also found at lower levels in the branchial arches. At stage 35, expressed in the rhombencephalon and in the eye retina.

It is found in the nucleus. In terms of biological role, transcription factor regulating the expression of cell cycle genes essential for DNA replication and mitosis. Plays a role in the control of cell proliferation. Also plays a role in DNA break repair, participating in the DNA damage checkpoint response. Promotes transcription of PHB2. The protein is Forkhead box protein M1 of Xenopus laevis (African clawed frog).